A 450-amino-acid polypeptide reads, in one-letter code: UDP-N-acetylmuramoylalanine--D-glutamate ligase (450 aa).

119-125 provides a ligand contact to ATP; the sequence is GSNGKTT.

This sequence belongs to the MurCDEF family.

The protein localises to the cytoplasm. The enzyme catalyses UDP-N-acetyl-alpha-D-muramoyl-L-alanine + D-glutamate + ATP = UDP-N-acetyl-alpha-D-muramoyl-L-alanyl-D-glutamate + ADP + phosphate + H(+). It functions in the pathway cell wall biogenesis; peptidoglycan biosynthesis. Cell wall formation. Catalyzes the addition of glutamate to the nucleotide precursor UDP-N-acetylmuramoyl-L-alanine (UMA). The chain is UDP-N-acetylmuramoylalanine--D-glutamate ligase from Bacillus cereus (strain ATCC 14579 / DSM 31 / CCUG 7414 / JCM 2152 / NBRC 15305 / NCIMB 9373 / NCTC 2599 / NRRL B-3711).